The following is a 715-amino-acid chain: 1,4-alpha-glucan branching enzyme GlgB (715 aa).

The active-site Nucleophile is the D396. E449 (proton donor) is an active-site residue.

The protein belongs to the glycosyl hydrolase 13 family. GlgB subfamily. Monomer.

The enzyme catalyses Transfers a segment of a (1-&gt;4)-alpha-D-glucan chain to a primary hydroxy group in a similar glucan chain.. The protein operates within glycan biosynthesis; glycogen biosynthesis. Its function is as follows. Catalyzes the formation of the alpha-1,6-glucosidic linkages in glycogen by scission of a 1,4-alpha-linked oligosaccharide from growing alpha-1,4-glucan chains and the subsequent attachment of the oligosaccharide to the alpha-1,6 position. The sequence is that of 1,4-alpha-glucan branching enzyme GlgB from Vibrio vulnificus (strain YJ016).